We begin with the raw amino-acid sequence, 688 residues long: Probable xyloglucan glycosyltransferase 7 (688 aa).

Residues 1–25 (MAPSWWGRSGGGGVGNGGGTPVVVK) are disordered. Positions 8 to 20 (RSGGGGVGNGGGT) are enriched in gly residues. A run of 2 helical transmembrane segments spans residues 121–141 (VSLV…LQGW) and 183–203 (VALF…CFWI). Asp-269 is an active-site residue. Asp-328 and Asp-330 together coordinate substrate. Residue Asp-422 is part of the active site. The next 2 helical transmembrane spans lie at 500 to 520 (LILP…TMFV) and 525 to 545 (LPAW…ILPA). Residues 604–635 (HSKQQRVGSAPNLDALTKEESNPKKDSKKKKH) are disordered. Residues 619-628 (LTKEESNPKK) are compositionally biased toward basic and acidic residues. 2 helical membrane-spanning segments follow: residues 638–657 (IYRK…ARSL) and 663–683 (IHFY…LDLI).

It belongs to the glycosyltransferase 2 family. Plant cellulose synthase-like C subfamily.

It localises to the golgi apparatus membrane. Functionally, probable beta-1,4-glucan synthase rather involved in the synthesis of the xyloglucan backbone than cellulose. Seems to work simultaneously with xyloglucan 6-xylosyltransferase. Xyloglucan is a noncellulosic polysaccharides of plant cell wall and consists of a glucan backbone substituted by xylose, galactose and fucose. This chain is Probable xyloglucan glycosyltransferase 7 (CSLC7), found in Oryza sativa subsp. japonica (Rice).